The chain runs to 616 residues: Glucoamylase P (616 aa).

A signal peptide spans 1–29; it reads MRLLPSSCAGALSLLCSLAIAAPTELKAR. Residue Trp149 participates in substrate binding. A glycan (N-linked (GlcNAc...) asparagine) is linked at Asn200. Residue Asp205 is the Proton acceptor of the active site. Glu208 functions as the Proton donor in the catalytic mechanism. N-linked (GlcNAc...) asparagine glycosylation occurs at Asn427. The CBM20 domain maps to 501-608; that stretch reads VTSSCQVSIT…AVTTDDAWMG (108 aa).

Belongs to the glycosyl hydrolase 15 family.

The protein resides in the secreted. It carries out the reaction Hydrolysis of terminal (1-&gt;4)-linked alpha-D-glucose residues successively from non-reducing ends of the chains with release of beta-D-glucose.. This Amorphotheca resinae (Creosote fungus) protein is Glucoamylase P (GAMP).